A 366-amino-acid chain; its full sequence is 3-dehydroquinate synthase (366 aa).

Residues D71–K76, G105–D109, T129–T130, K142, K151, and C169–T172 each bind NAD(+). Zn(2+) contacts are provided by E184, H248, and H265.

It belongs to the sugar phosphate cyclases superfamily. Dehydroquinate synthase family. The cofactor is NAD(+). Requires Co(2+) as cofactor. It depends on Zn(2+) as a cofactor.

The protein localises to the cytoplasm. It carries out the reaction 7-phospho-2-dehydro-3-deoxy-D-arabino-heptonate = 3-dehydroquinate + phosphate. It participates in metabolic intermediate biosynthesis; chorismate biosynthesis; chorismate from D-erythrose 4-phosphate and phosphoenolpyruvate: step 2/7. Catalyzes the conversion of 3-deoxy-D-arabino-heptulosonate 7-phosphate (DAHP) to dehydroquinate (DHQ). In Photorhabdus laumondii subsp. laumondii (strain DSM 15139 / CIP 105565 / TT01) (Photorhabdus luminescens subsp. laumondii), this protein is 3-dehydroquinate synthase.